Reading from the N-terminus, the 321-residue chain is Putative sulfotransferase vep-2 (321 aa).

Residues 11–31 traverse the membrane as a helical segment; the sequence is IARVLIIIASISVICITLFIS.

This sequence to C.elegans C41C4.1 and C18B2.2.

The protein resides in the membrane. The chain is Putative sulfotransferase vep-2 from Caenorhabditis elegans.